A 187-amino-acid chain; its full sequence is ATP synthase subunit b (187 aa).

Residues 31 to 51 (VAIMGLAIFVLFLILSYLLFN) traverse the membrane as a helical segment.

The protein belongs to the ATPase B chain family. As to quaternary structure, F-type ATPases have 2 components, F(1) - the catalytic core - and F(0) - the membrane proton channel. F(1) has five subunits: alpha(3), beta(3), gamma(1), delta(1), epsilon(1). F(0) has three main subunits: a(1), b(2) and c(10-14). The alpha and beta chains form an alternating ring which encloses part of the gamma chain. F(1) is attached to F(0) by a central stalk formed by the gamma and epsilon chains, while a peripheral stalk is formed by the delta and b chains.

It is found in the cell membrane. In terms of biological role, f(1)F(0) ATP synthase produces ATP from ADP in the presence of a proton or sodium gradient. F-type ATPases consist of two structural domains, F(1) containing the extramembraneous catalytic core and F(0) containing the membrane proton channel, linked together by a central stalk and a peripheral stalk. During catalysis, ATP synthesis in the catalytic domain of F(1) is coupled via a rotary mechanism of the central stalk subunits to proton translocation. Functionally, component of the F(0) channel, it forms part of the peripheral stalk, linking F(1) to F(0). The protein is ATP synthase subunit b of Lachnoclostridium phytofermentans (strain ATCC 700394 / DSM 18823 / ISDg) (Clostridium phytofermentans).